The chain runs to 358 residues: MPRTKRVYSGKTITGVLYPVAICMLFVAINVKLSQPEQQEQSKVVYGLFHSYDTADSGTITLYLIGFLILTTSLGVFCYQMKFYKAIKVYVLANSIGILLVYSVFHFQRIAEAQSIPVSVPTFFFLILQFGGLGITCLHWKSHRRLHQFYLIMLAGLTAIFILNILPDWTVWMALTAISFWDIVAVLTPCGPLKMLVETANRRGDDKFPAILYNSSSYVNEVDSPDTTRSNSTPLTEFNNSSSSRLLESDSLLRPPVIPRQIREVREVEGTIRLGMGDFVFYSLMLGNTVQTCPLPTVVACFVSNLVGLTITLPIVTLSQTALPALPFPLAIAAIFYFSSHIALTPFTDLCTSQLILI.

Over 1–12 (MPRTKRVYSGKT) the chain is Cytoplasmic. A helical transmembrane segment spans residues 13–33 (ITGVLYPVAICMLFVAINVKL). At 34-57 (SQPEQQEQSKVVYGLFHSYDTADS) the chain is on the lumenal side. A helical transmembrane segment spans residues 58 to 78 (GTITLYLIGFLILTTSLGVFC). The Cytoplasmic segment spans residues 79–86 (YQMKFYKA). A helical membrane pass occupies residues 87-107 (IKVYVLANSIGILLVYSVFHF). Residues 108–115 (QRIAEAQS) lie on the Lumenal side of the membrane. The chain crosses the membrane as a helical span at residues 116–136 (IPVSVPTFFFLILQFGGLGIT). At 137 to 148 (CLHWKSHRRLHQ) the chain is on the cytoplasmic side. The chain crosses the membrane as a helical span at residues 149–169 (FYLIMLAGLTAIFILNILPDW). A topological domain (lumenal) is located at residue T170. The chain crosses the membrane as a helical span at residues 171 to 191 (VWMALTAISFWDIVAVLTPCG). D182 is an active-site residue. Topologically, residues 192–273 (PLKMLVETAN…EVREVEGTIR (82 aa)) are cytoplasmic. Residues 221 to 240 (EVDSPDTTRSNSTPLTEFNN) show a composition bias toward polar residues. The disordered stretch occupies residues 221–242 (EVDSPDTTRSNSTPLTEFNNSS). A helical transmembrane segment spans residues 274–294 (LGMGDFVFYSLMLGNTVQTCP). D278 is an active-site residue. Residues 295 to 297 (LPT) lie on the Lumenal side of the membrane. A helical transmembrane segment spans residues 298–318 (VVACFVSNLVGLTITLPIVTL). Topologically, residues 319–321 (SQT) are cytoplasmic. An intramembrane region (helical) is located at residues 322 to 342 (ALPALPFPLAIAAIFYFSSHI). Positions 324 to 326 (PAL) match the PAL motif. Residues 343–358 (ALTPFTDLCTSQLILI) are Cytoplasmic-facing.

Belongs to the peptidase A22A family. Homodimer. Component of the gamma-secretase complex, a complex probably composed of the presenilin homodimer (sel-12, hop-1 or spe-4), nicastrin (aph-2), aph-1 and pen-2. Weakly expressed.

It localises to the endoplasmic reticulum membrane. It is found in the golgi apparatus membrane. Its function is as follows. Probable catalytic subunit of the gamma-secretase complex, an endoprotease complex that catalyzes the intramembrane cleavage of integral membrane proteins such as Notch receptors (lin-12 or glp-1). Probably works redundantly of lin-12, which provides more presenilin function. The sequence is that of Presenilin hop-1 (hop-1) from Caenorhabditis elegans.